The primary structure comprises 78 residues: Large ribosomal subunit protein bL28 (78 aa).

The tract at residues 1 to 21 (MSRVCQVTGKKPMVGNNRSHA) is disordered.

This sequence belongs to the bacterial ribosomal protein bL28 family.

The chain is Large ribosomal subunit protein bL28 from Shewanella loihica (strain ATCC BAA-1088 / PV-4).